A 635-amino-acid chain; its full sequence is Chaperone protein HtpG (635 aa).

The interval 1-337 is a; substrate-binding; that stretch reads MELKMHNVQE…SPDLPLNISR (337 aa). Residues 338 to 556 form a b region; sequence ETLQNNRVVE…EGAMDLRMER (219 aa). The c stretch occupies residues 557-635; sequence FLREQKQLNY…LNNLLGKISV (79 aa).

It belongs to the heat shock protein 90 family. In terms of assembly, homodimer.

It is found in the cytoplasm. Its function is as follows. Molecular chaperone. Has ATPase activity. The protein is Chaperone protein HtpG of Wolbachia pipientis wMel.